The chain runs to 143 residues: uncharacterized protein (143 aa).

The protein localises to the mitochondrion. This is an uncharacterized protein from Arabidopsis thaliana (Mouse-ear cress).